Here is a 601-residue protein sequence, read N- to C-terminus: Elongation factor 4 (601 aa).

The 183-residue stretch at 6–188 (EHIRNFSIIA…EIVRKIPAPE (183 aa)) folds into the tr-type G domain. Residues 18–23 (DHGKST) and 135–138 (NKID) contribute to the GTP site.

Belongs to the TRAFAC class translation factor GTPase superfamily. Classic translation factor GTPase family. LepA subfamily.

It localises to the cell inner membrane. The catalysed reaction is GTP + H2O = GDP + phosphate + H(+). Required for accurate and efficient protein synthesis under certain stress conditions. May act as a fidelity factor of the translation reaction, by catalyzing a one-codon backward translocation of tRNAs on improperly translocated ribosomes. Back-translocation proceeds from a post-translocation (POST) complex to a pre-translocation (PRE) complex, thus giving elongation factor G a second chance to translocate the tRNAs correctly. Binds to ribosomes in a GTP-dependent manner. The polypeptide is Elongation factor 4 (Hydrogenovibrio crunogenus (strain DSM 25203 / XCL-2) (Thiomicrospira crunogena)).